Here is a 481-residue protein sequence, read N- to C-terminus: Cysteine--tRNA ligase (481 aa).

C29 serves as a coordination point for Zn(2+). The 'HIGH' region signature appears at 31 to 41 (PTVYDYSHLGH). Zn(2+) contacts are provided by C210, H235, and E239. The 'KMSKS' region signature appears at 272–276 (KMSKS). K275 contributes to the ATP binding site.

It belongs to the class-I aminoacyl-tRNA synthetase family. As to quaternary structure, monomer. Zn(2+) serves as cofactor.

It is found in the cytoplasm. The enzyme catalyses tRNA(Cys) + L-cysteine + ATP = L-cysteinyl-tRNA(Cys) + AMP + diphosphate. The polypeptide is Cysteine--tRNA ligase (Anaeromyxobacter sp. (strain K)).